The sequence spans 400 residues: Elongation factor Tu 1 (400 aa).

The region spanning 10-209 (KPHLNIGTIG…AVDSYIPLPQ (200 aa)) is the tr-type G domain. Residues 19-26 (GHIDHGKT) form a G1 region. 19–26 (GHIDHGKT) lines the GTP pocket. Residue Thr26 participates in Mg(2+) binding. Positions 60–64 (GITIN) are G2. Positions 81–84 (DCPG) are G3. Residues 81 to 85 (DCPGH) and 136 to 139 (NKTD) contribute to the GTP site. The G4 stretch occupies residues 136–139 (NKTD). The tract at residues 174–176 (SAL) is G5.

The protein belongs to the TRAFAC class translation factor GTPase superfamily. Classic translation factor GTPase family. EF-Tu/EF-1A subfamily. Monomer.

It localises to the cytoplasm. It carries out the reaction GTP + H2O = GDP + phosphate + H(+). GTP hydrolase that promotes the GTP-dependent binding of aminoacyl-tRNA to the A-site of ribosomes during protein biosynthesis. This Syntrophomonas wolfei subsp. wolfei (strain DSM 2245B / Goettingen) protein is Elongation factor Tu 1.